The sequence spans 445 residues: Tubulin beta chain (445 aa).

Residues Gln11, Glu69, Ser138, Gly142, Thr143, Gly144, Asn204, and Asn226 each contribute to the GTP site. Glu69 is a binding site for Mg(2+).

This sequence belongs to the tubulin family. In terms of assembly, dimer of alpha and beta chains. A typical microtubule is a hollow water-filled tube with an outer diameter of 25 nm and an inner diameter of 15 nM. Alpha-beta heterodimers associate head-to-tail to form protofilaments running lengthwise along the microtubule wall with the beta-tubulin subunit facing the microtubule plus end conferring a structural polarity. Microtubules usually have 13 protofilaments but different protofilament numbers can be found in some organisms and specialized cells. Mg(2+) serves as cofactor.

Its subcellular location is the cytoplasm. The protein resides in the cytoskeleton. Functionally, tubulin is the major constituent of microtubules, a cylinder consisting of laterally associated linear protofilaments composed of alpha- and beta-tubulin heterodimers. Microtubules grow by the addition of GTP-tubulin dimers to the microtubule end, where a stabilizing cap forms. Below the cap, tubulin dimers are in GDP-bound state, owing to GTPase activity of alpha-tubulin. The protein is Tubulin beta chain of Leishmania mexicana.